Reading from the N-terminus, the 561-residue chain is CWF19-like protein mug161 (561 aa).

Residues 286–338 (QQTNKFHKSKSSTALFKSKKDSSSSLNKMHKSESHSALNNLHKSESGTSLNNR) form a disordered region. A Phosphoserine modification is found at Ser-296. Residue Thr-298 is modified to Phosphothreonine. Phosphoserine is present on residues Ser-317, Ser-319, Ser-331, and Ser-334. The span at 320–337 (HSALNNLHKSESGTSLNN) shows a compositional bias: polar residues.

Belongs to the CWF19 family.

It is found in the nucleus. Has a role in meiosis. This chain is CWF19-like protein mug161 (mug161), found in Schizosaccharomyces pombe (strain 972 / ATCC 24843) (Fission yeast).